The primary structure comprises 159 residues: Putative pre-16S rRNA nuclease (159 aa).

Belongs to the YqgF nuclease family.

The protein localises to the cytoplasm. In terms of biological role, could be a nuclease involved in processing of the 5'-end of pre-16S rRNA. The sequence is that of Putative pre-16S rRNA nuclease from Thermobifida fusca (strain YX).